The sequence spans 483 residues: FAD-dependent oxidoreductase oblC (483 aa).

The first 21 residues, 1–21 (MRSVTSLVSFSACLLASSVTA), serve as a signal peptide directing secretion. N-linked (GlcNAc...) asparagine glycosylation is found at N100, N137, N190, and N240.

It belongs to the beta-cyclopiazonate dehydrogenase family. FAD is required as a cofactor.

It functions in the pathway secondary metabolite biosynthesis; terpenoid biosynthesis. Its function is as follows. FAD-dependent oxidoreductase; part of the gene cluster that mediates the biosynthesis of the sesterterpenes ophiobolins, fungal phytotoxins with potential anti-cancer activities. The first step of the pathway is performed by the sesterterpene synthase oblA that possesses both prenyl transferase and terpene cyclase activity, converting isopentenyl diphosphate and dimethylallyl diphosphate into geranylfarnesyl diphosphate (GFPP) and further converting GFPP into ophiobolin F, respectively. Other sesterterpenoids (C(25) terpenoids) are found as minor products of oblA. The cytochrome P450 monooxygenase oblB then catalyzes a four-step oxidative transformation of ophiobolin F to yield ophiobolin C. The FAD-dependent oxidoreductase oblC might be involved in a later oxidation step that produces ophiobolin A. The chain is FAD-dependent oxidoreductase oblC from Cochliobolus heterostrophus (strain C5 / ATCC 48332 / race O) (Southern corn leaf blight fungus).